Reading from the N-terminus, the 353-residue chain is MRANGSELNGTVLPRDPPAEGSPRRPPWVTSTLATILIFTIVVDLLGNLLVILSVYRNKKLRNAGNIFVVSLAIADLVVAIYPYPLVLTSVFHNGWNLGYLHCQISGFLMGLSVIGSIFNITGIAINRYCYICHSLKYDKLYSDKNSLCYVGLIWVLTVVAIVPNLFVGSLQYDPRIYSCTFAQSVSSAYTIAVVFFHFILPIAIVTYCYLRIWILVIQVRRRVKPDNNPRLKPHDFRNFVTMFVVFVLFAVCWAPLNFIGLAVAVDPETIIPRIPEWLFVSSYYMAYFNSCLNAIIYGLLNQNFRREYKKIVVSFCTAKAFFQDSSNDAADRIRSKPSPLITNNNQVKVDSV.

The tract at residues 1–26 (MRANGSELNGTVLPRDPPAEGSPRRP) is disordered. At 1–32 (MRANGSELNGTVLPRDPPAEGSPRRPPWVTST) the chain is on the extracellular side. Residues Asn-4 and Asn-9 are each glycosylated (N-linked (GlcNAc...) asparagine). A helical transmembrane segment spans residues 33-53 (LATILIFTIVVDLLGNLLVIL). Topologically, residues 54-66 (SVYRNKKLRNAGN) are cytoplasmic. A helical membrane pass occupies residues 67-87 (IFVVSLAIADLVVAIYPYPLV). Over 88-105 (LTSVFHNGWNLGYLHCQI) the chain is Extracellular. Cys-103 and Cys-180 are joined by a disulfide. A helical transmembrane segment spans residues 106-126 (SGFLMGLSVIGSIFNITGIAI). The Cytoplasmic segment spans residues 127 to 145 (NRYCYICHSLKYDKLYSDK). Residues 146-166 (NSLCYVGLIWVLTVVAIVPNL) form a helical membrane-spanning segment. Over 167–190 (FVGSLQYDPRIYSCTFAQSVSSAY) the chain is Extracellular. Residues 191-211 (TIAVVFFHFILPIAIVTYCYL) form a helical membrane-spanning segment. The Cytoplasmic portion of the chain corresponds to 212-243 (RIWILVIQVRRRVKPDNNPRLKPHDFRNFVTM). The chain crosses the membrane as a helical span at residues 244–264 (FVVFVLFAVCWAPLNFIGLAV). Over 265 to 277 (AVDPETIIPRIPE) the chain is Extracellular. Residues 278-298 (WLFVSSYYMAYFNSCLNAIIY) form a helical membrane-spanning segment. At 299-353 (GLLNQNFRREYKKIVVSFCTAKAFFQDSSNDAADRIRSKPSPLITNNNQVKVDSV) the chain is on the cytoplasmic side.

This sequence belongs to the G-protein coupled receptor 1 family. Expressed in optic tectum and retina, less in neostriatum, hypothalamus and thalamus.

The protein localises to the cell membrane. High affinity receptor for melatonin. The activity of this receptor is mediated by pertussis toxin sensitive G proteins that inhibits adenylate cyclase activity. The protein is Melatonin receptor type 1A of Gallus gallus (Chicken).